We begin with the raw amino-acid sequence, 559 residues long: Hepatocyte nuclear factor 1-beta-A (559 aa).

Residues M1–E35 are dimerization. The region spanning M5–D36 is the HNF-p1 domain. The segment at M53–I98 is disordered. Positions E85–D94 are enriched in acidic residues. The POU-specific atypical domain maps to K100 to Q195. The homeobox; HNF1-type DNA-binding region spans L240–Q320. Composition is skewed to low complexity over residues L334–S354 and T370–N381. The interval L334–S384 is disordered.

Belongs to the HNF1 homeobox family. Binds DNA as a dimer. Can form homodimer or heterodimer with HNF1-alpha. In terms of tissue distribution, during embryonic development, expressed dynamically in the developing hindbrain, kidney (pronephros), gut, liver and pancreas; expressed in both intermediate mesoderm (precursor to the kidney) and the caudal hindbrain (including rhombomeres r5 and r6) at 10 hpf with expression diminishing caudally by 14 hpf. Strongly expressed in adult kidney, gut, liver and swim bladder; weakly expressed in brain, eye, testis, ovary and heart.

The protein localises to the nucleus. Functionally, transcription factor that binds to the inverted palindrome 5'-GTTAATNATTAAC-3'. Required for induction of rhombomere r5/r6 gene expression in the hindbrain. The chain is Hepatocyte nuclear factor 1-beta-A (hnf1ba) from Danio rerio (Zebrafish).